The sequence spans 203 residues: bMERB domain-containing protein 1 (203 aa).

The region spanning 3 to 149 is the bMERB domain; sequence LKQSLSVHLE…EQEEDKEMAD (147 aa). The interval 161-184 is disordered; it reads VTKTSASSRAEKKAEPPPSKPTVA.

The protein is bMERB domain-containing protein 1 (Bmerb1) of Mus musculus (Mouse).